We begin with the raw amino-acid sequence, 223 residues long: Alpha-S2-casein (223 aa).

The N-terminal stretch at 1-15 (MKLFIFTCLLAVALA) is a signal peptide. 8 positions are modified to phosphoserine: S23, S24, S25, S28, S46, S71, S72, and S73. Repeats lie at residues 76–128 (FADI…TLGK) and 129–223 (EQIS…ERQA). Phosphoserine is present on residues S132, S147, and S155.

It belongs to the alpha-casein family. Mammary gland specific. Secreted in milk.

The protein localises to the secreted. Important role in the capacity of milk to transport calcium phosphate. This chain is Alpha-S2-casein (CSN1S2), found in Cavia porcellus (Guinea pig).